The chain runs to 386 residues: Histone-lysine N-methyltransferase SETD7 (386 aa).

A compositionally biased stretch (acidic residues) spans 1-12 (MDSSDDEIACDE). Residues 1 to 21 (MDSSDDEIACDEGDYKGAKDD) form a disordered region. MORN repeat units follow at residues 15–38 (YKGA…SGDE), 39–61 (FIGA…DDST), 62–84 (LEGN…DGSI), and 109–131 (FRGQ…DGGS). The SET domain maps to 222 to 344 (ELVYAAPSKI…EGDELTVHYT (123 aa)). Residues 234–236 (AGE), N304, and H305 each bind S-adenosyl-L-methionine.

It belongs to the class V-like SAM-binding methyltransferase superfamily. Histone-lysine methyltransferase family. SET7 subfamily.

The protein localises to the nucleus. The protein resides in the chromosome. The enzyme catalyses L-lysyl(4)-[histone H3] + S-adenosyl-L-methionine = N(6)-methyl-L-lysyl(4)-[histone H3] + S-adenosyl-L-homocysteine + H(+). It carries out the reaction L-lysyl-[protein] + S-adenosyl-L-methionine = N(6)-methyl-L-lysyl-[protein] + S-adenosyl-L-homocysteine + H(+). Its function is as follows. Histone methyltransferase that specifically monomethylates 'Lys-4' of histone H3. H3 'Lys-4' methylation represents a specific tag for epigenetic transcriptional activation. Plays a central role in the transcriptional activation of genes. Also has methyltransferase activity toward non-histone proteins. This chain is Histone-lysine N-methyltransferase SETD7 (setd7), found in Halocynthia roretzi (Sea squirt).